The chain runs to 801 residues: Elongation factor G, mitochondrial (801 aa).

A mitochondrion-targeting transit peptide spans methionine 1 to glutamine 65. The region spanning serine 100–serine 387 is the tr-type G domain. GTP is bound by residues alanine 109–threonine 116, aspartate 185–histidine 189, and asparagine 239–aspartate 242.

The protein belongs to the TRAFAC class translation factor GTPase superfamily. Classic translation factor GTPase family. EF-G/EF-2 subfamily.

The protein resides in the mitochondrion. It participates in protein biosynthesis; polypeptide chain elongation. Functionally, mitochondrial GTPase that catalyzes the GTP-dependent ribosomal translocation step during translation elongation. During this step, the ribosome changes from the pre-translocational (PRE) to the post-translocational (POST) state as the newly formed A-site-bound peptidyl-tRNA and P-site-bound deacylated tRNA move to the P and E sites, respectively. Catalyzes the coordinated movement of the two tRNA molecules, the mRNA and conformational changes in the ribosome. This Pyrenophora tritici-repentis (strain Pt-1C-BFP) (Wheat tan spot fungus) protein is Elongation factor G, mitochondrial (mef1).